The following is a 441-amino-acid chain: Amino-acid acetyltransferase (441 aa).

The 140-residue stretch at 295 to 434 (EQVRRATIND…QALYNYQRRS (140 aa)) folds into the N-acetyltransferase domain.

The protein belongs to the acetyltransferase family. ArgA subfamily. In terms of assembly, homohexamer.

It localises to the cytoplasm. The enzyme catalyses L-glutamate + acetyl-CoA = N-acetyl-L-glutamate + CoA + H(+). It functions in the pathway amino-acid biosynthesis; L-arginine biosynthesis; N(2)-acetyl-L-ornithine from L-glutamate: step 1/4. This is Amino-acid acetyltransferase from Pectobacterium carotovorum subsp. carotovorum (strain PC1).